A 366-amino-acid chain; its full sequence is Dual-specificity RNA methyltransferase RlmN (366 aa).

Residue glutamate 102 is the Proton acceptor of the active site. A Radical SAM core domain is found at 108 to 340; that stretch reads DEGRNTLCVS…TTTRKTRGRD (233 aa). Cysteines 115 and 345 form a disulfide. [4Fe-4S] cluster-binding residues include cysteine 122, cysteine 126, and cysteine 129. S-adenosyl-L-methionine contacts are provided by residues 171-172, serine 203, 225-227, and asparagine 302; these read GE and SLH. The active-site S-methylcysteine intermediate is cysteine 345.

Belongs to the radical SAM superfamily. RlmN family. Requires [4Fe-4S] cluster as cofactor.

The protein resides in the cytoplasm. The enzyme catalyses adenosine(2503) in 23S rRNA + 2 reduced [2Fe-2S]-[ferredoxin] + 2 S-adenosyl-L-methionine = 2-methyladenosine(2503) in 23S rRNA + 5'-deoxyadenosine + L-methionine + 2 oxidized [2Fe-2S]-[ferredoxin] + S-adenosyl-L-homocysteine. It catalyses the reaction adenosine(37) in tRNA + 2 reduced [2Fe-2S]-[ferredoxin] + 2 S-adenosyl-L-methionine = 2-methyladenosine(37) in tRNA + 5'-deoxyadenosine + L-methionine + 2 oxidized [2Fe-2S]-[ferredoxin] + S-adenosyl-L-homocysteine. Specifically methylates position 2 of adenine 2503 in 23S rRNA and position 2 of adenine 37 in tRNAs. m2A2503 modification seems to play a crucial role in the proofreading step occurring at the peptidyl transferase center and thus would serve to optimize ribosomal fidelity. The chain is Dual-specificity RNA methyltransferase RlmN from Methylococcus capsulatus (strain ATCC 33009 / NCIMB 11132 / Bath).